A 458-amino-acid polypeptide reads, in one-letter code: UPF0210 protein MmarC6_1246 (458 aa).

It belongs to the UPF0210 family.

The polypeptide is UPF0210 protein MmarC6_1246 (Methanococcus maripaludis (strain C6 / ATCC BAA-1332)).